Reading from the N-terminus, the 443-residue chain is ATP-dependent protease ATPase subunit HslU (443 aa).

Residues Ile-20, 62 to 67, Asp-255, Glu-321, and Arg-393 each bind ATP; that span reads GVGKTE.

The protein belongs to the ClpX chaperone family. HslU subfamily. As to quaternary structure, a double ring-shaped homohexamer of HslV is capped on each side by a ring-shaped HslU homohexamer. The assembly of the HslU/HslV complex is dependent on binding of ATP.

The protein resides in the cytoplasm. Functionally, ATPase subunit of a proteasome-like degradation complex; this subunit has chaperone activity. The binding of ATP and its subsequent hydrolysis by HslU are essential for unfolding of protein substrates subsequently hydrolyzed by HslV. HslU recognizes the N-terminal part of its protein substrates and unfolds these before they are guided to HslV for hydrolysis. The chain is ATP-dependent protease ATPase subunit HslU from Helicobacter pylori (strain ATCC 700392 / 26695) (Campylobacter pylori).